Reading from the N-terminus, the 565-residue chain is Methionine--tRNA ligase (565 aa).

Residues 16-26 carry the 'HIGH' region motif; it reads PYAYGVPHLGN. Residues C148, C151, C161, and C164 each contribute to the Zn(2+) site. The short motif at 338–342 is the 'KMSKS' region element; sequence KFSKS. K341 is an ATP binding site.

This sequence belongs to the class-I aminoacyl-tRNA synthetase family. MetG type 1 subfamily. Zn(2+) is required as a cofactor.

It localises to the cytoplasm. The enzyme catalyses tRNA(Met) + L-methionine + ATP = L-methionyl-tRNA(Met) + AMP + diphosphate. In terms of biological role, is required not only for elongation of protein synthesis but also for the initiation of all mRNA translation through initiator tRNA(fMet) aminoacylation. The polypeptide is Methionine--tRNA ligase (Thermofilum pendens (strain DSM 2475 / Hrk 5)).